The following is a 281-amino-acid chain: MGKFCCFTSASEVVGGQSSSRSGKGRSDEGMIKYGFSLVKGKANHPMEDYHVANFINIQDHELGLFAIYDGHMGDSVPAYLQKRLFSNILKEGEFWVDPRRSIAKAYEKTDQAILSNSSDLGRGGSTAVTAILINGRKLWIANVGDSRAVLSHGGAITQMSTDHEPRTERSSIEDRGGFVSNLPGDVPRVNGQLAVSRAFGDKGLKTHLSSEPDIKEATVDSQTDVLLLASDGIWKVMTNEEAMEIARRVKDPQKAAKELTAEALRRESKDDISCVVVRFR.

The region spanning 33–280 is the PPM-type phosphatase domain; that stretch reads KYGFSLVKGK…DDISCVVVRF (248 aa). Positions 70, 71, 232, and 271 each coordinate Mn(2+).

It belongs to the PP2C family. Interacts with phytochromes (via N-terminus). The cofactor is Mg(2+). It depends on Mn(2+) as a cofactor.

It is found in the nucleus. The enzyme catalyses O-phospho-L-seryl-[protein] + H2O = L-seryl-[protein] + phosphate. It catalyses the reaction O-phospho-L-threonyl-[protein] + H2O = L-threonyl-[protein] + phosphate. In terms of biological role, involved in the regulation of phytochrome signaling. May regulate phytochrome-interacting factor 3 (PIF3) through the dephosphorylation of phytochrome. The chain is Probable protein phosphatase 2C 9 from Arabidopsis thaliana (Mouse-ear cress).